Consider the following 154-residue polypeptide: Ribosome maturation factor RimP (154 aa).

It belongs to the RimP family.

The protein localises to the cytoplasm. Its function is as follows. Required for maturation of 30S ribosomal subunits. The sequence is that of Ribosome maturation factor RimP from Alkaliphilus oremlandii (strain OhILAs) (Clostridium oremlandii (strain OhILAs)).